We begin with the raw amino-acid sequence, 247 residues long: Triosephosphate isomerase (247 aa).

Asn10–Lys12 is a binding site for substrate. The active-site Electrophile is the His92. Glu164 (proton acceptor) is an active-site residue. Substrate-binding positions include Gly170, Ser209, and Gly230–Gly231.

It belongs to the triosephosphate isomerase family. In terms of assembly, homodimer.

The protein resides in the cytoplasm. The enzyme catalyses D-glyceraldehyde 3-phosphate = dihydroxyacetone phosphate. It functions in the pathway carbohydrate biosynthesis; gluconeogenesis. Its pathway is carbohydrate degradation; glycolysis; D-glyceraldehyde 3-phosphate from glycerone phosphate: step 1/1. Functionally, involved in the gluconeogenesis. Catalyzes stereospecifically the conversion of dihydroxyacetone phosphate (DHAP) to D-glyceraldehyde-3-phosphate (G3P). This Alcanivorax borkumensis (strain ATCC 700651 / DSM 11573 / NCIMB 13689 / SK2) protein is Triosephosphate isomerase.